Consider the following 371-residue polypeptide: Transaldolase (371 aa).

An Isoglutamyl lysine isopeptide (Lys-Gln) (interchain with Q-Cter in protein Pup) cross-link involves residue Lys132. Lys142 (schiff-base intermediate with substrate) is an active-site residue.

The protein belongs to the transaldolase family. Type 2 subfamily.

It is found in the cytoplasm. The catalysed reaction is D-sedoheptulose 7-phosphate + D-glyceraldehyde 3-phosphate = D-erythrose 4-phosphate + beta-D-fructose 6-phosphate. It participates in carbohydrate degradation; pentose phosphate pathway; D-glyceraldehyde 3-phosphate and beta-D-fructose 6-phosphate from D-ribose 5-phosphate and D-xylulose 5-phosphate (non-oxidative stage): step 2/3. In terms of biological role, transaldolase is important for the balance of metabolites in the pentose-phosphate pathway. The polypeptide is Transaldolase (tal) (Mycolicibacterium smegmatis (strain ATCC 700084 / mc(2)155) (Mycobacterium smegmatis)).